Consider the following 246-residue polypeptide: UL16-binding protein 6 (246 aa).

A signal peptide spans 1-25 (MAAAAIPALLLCLPLLFLLFGWSRA). Positions 29–117 (DPHSLCYDIT…IQLENYTPKE (89 aa)) are MHC class I alpha-1 like. C50 and C66 are joined by a disulfide. 2 N-linked (GlcNAc...) asparagine glycosylation sites follow: N68 and N82. The MHC class I alpha-2 like stretch occupies residues 118 to 210 (PLTLQARMSC…MDSTLEPSAG (93 aa)). A disulfide bridge connects residues C127 and C190. A lipid anchor (GPI-anchor amidated glycine) is attached at G218. Positions 219-246 (TTQLRATATTLILCCLLIILPCFILPGI) are cleaved as a propeptide — removed in mature form.

Belongs to the MHC class I family. Interacts with KLRK1/NKG2D. In terms of assembly, (Microbial infection) In CMV-infected cells, interacts with the viral glycoprotein UL16; this interaction causes relocalization from the cell surface to the cytoplasm and prevents binding to and activation of KLRK1/NKG2D, providing CMV with an immune evasion mechanism. As to expression, widely expressed. Expressed in trachea. Constitutively expressed in peripheral blood mononuclear cells, including B-cells and natural killer cells, as well as CD4+ and CD8+ T-cells and monocytes. Tends to be up-regulated in various lymphoid malignancies, including chronic lymphocytic leukemia.

It localises to the cell membrane. It is found in the endoplasmic reticulum. Functionally, binds and activates the KLRK1/NKG2D receptor, mediating natural killer cell cytotoxicity. This chain is UL16-binding protein 6 (RAET1L), found in Homo sapiens (Human).